Consider the following 753-residue polypeptide: 5-methyltetrahydropteroyltriglutamate--homocysteine methyltransferase (753 aa).

5-methyltetrahydropteroyltri-L-glutamate contacts are provided by residues 17 to 20 (RELK) and K117. Residues 431 to 433 (IGS) and E484 each bind L-homocysteine. L-methionine-binding positions include 431 to 433 (IGS) and E484. 5-methyltetrahydropteroyltri-L-glutamate is bound by residues 515–516 (RC) and W561. L-homocysteine is bound at residue D599. D599 is a binding site for L-methionine. E605 is a binding site for 5-methyltetrahydropteroyltri-L-glutamate. The Zn(2+) site is built by H641, C643, and E665. H694 functions as the Proton donor in the catalytic mechanism. C726 is a binding site for Zn(2+).

Belongs to the vitamin-B12 independent methionine synthase family. It depends on Zn(2+) as a cofactor.

It catalyses the reaction 5-methyltetrahydropteroyltri-L-glutamate + L-homocysteine = tetrahydropteroyltri-L-glutamate + L-methionine. The protein operates within amino-acid biosynthesis; L-methionine biosynthesis via de novo pathway; L-methionine from L-homocysteine (MetE route): step 1/1. In terms of biological role, catalyzes the transfer of a methyl group from 5-methyltetrahydrofolate to homocysteine resulting in methionine formation. This Enterobacter sp. (strain 638) protein is 5-methyltetrahydropteroyltriglutamate--homocysteine methyltransferase.